Consider the following 161-residue polypeptide: Transcription elongation factor GreA (161 aa).

A coiled-coil region spans residues 8-28 (LTQEGFKQLEKELENLIQVKR).

The protein belongs to the GreA/GreB family.

Its function is as follows. Necessary for efficient RNA polymerase transcription elongation past template-encoded arresting sites. The arresting sites in DNA have the property of trapping a certain fraction of elongating RNA polymerases that pass through, resulting in locked ternary complexes. Cleavage of the nascent transcript by cleavage factors such as GreA or GreB allows the resumption of elongation from the new 3'terminus. GreA releases sequences of 2 to 3 nucleotides. The polypeptide is Transcription elongation factor GreA (Mycoplasma genitalium (strain ATCC 33530 / DSM 19775 / NCTC 10195 / G37) (Mycoplasmoides genitalium)).